Here is a 280-residue protein sequence, read N- to C-terminus: Phosphonates import ATP-binding protein PhnC (280 aa).

Residues Phe2 to Lys245 form the ABC transporter domain. Gly34–Ser41 serves as a coordination point for ATP. Residues Thr257–His280 form a disordered region. The span at Glu260–Ser269 shows a compositional bias: basic and acidic residues.

It belongs to the ABC transporter superfamily. Phosphonates importer (TC 3.A.1.9.1) family. In terms of assembly, the complex is composed of two ATP-binding proteins (PhnC), two transmembrane proteins (PhnE) and a solute-binding protein (PhnD).

The protein localises to the cell inner membrane. The enzyme catalyses phosphonate(out) + ATP + H2O = phosphonate(in) + ADP + phosphate + H(+). Part of the ABC transporter complex PhnCDE involved in phosphonates import. Responsible for energy coupling to the transport system. This Rhizobium johnstonii (strain DSM 114642 / LMG 32736 / 3841) (Rhizobium leguminosarum bv. viciae) protein is Phosphonates import ATP-binding protein PhnC.